Here is a 329-residue protein sequence, read N- to C-terminus: Ribosomal RNA small subunit methyltransferase H (329 aa).

S-adenosyl-L-methionine is bound by residues 46-48 (GGH), D65, F92, D113, and H120. A disordered region spans residues 295-329 (RGAERPSPAEVAANPRAASARLRAAEKIRDTREAA). Residues 317 to 329 (RAAEKIRDTREAA) show a composition bias toward basic and acidic residues.

This sequence belongs to the methyltransferase superfamily. RsmH family.

Its subcellular location is the cytoplasm. It carries out the reaction cytidine(1402) in 16S rRNA + S-adenosyl-L-methionine = N(4)-methylcytidine(1402) in 16S rRNA + S-adenosyl-L-homocysteine + H(+). Its function is as follows. Specifically methylates the N4 position of cytidine in position 1402 (C1402) of 16S rRNA. The sequence is that of Ribosomal RNA small subunit methyltransferase H from Acidothermus cellulolyticus (strain ATCC 43068 / DSM 8971 / 11B).